A 340-amino-acid chain; its full sequence is MSRKFMQVYEYDREQYLDEFIEDRYNDSFITSPEYYSAEKYMCRYTTLNHNCINVRRCALDSKLLHDIITNCKIYNNIELVRATKFVYYLDLIKCNWVSKVGDSVLYPVIFITHTSTRNLDKVSVKTYKGVKVKKLNRCADHAIVINPFVKFKLTLPNKTSHAKVLVTFCKLKTDITPVEAPLPGNVLVYTFPDINKRIPGYIHLNIEGCIDGMIYINSSKFACVLKLHRSMYRIPPFPIDICSCCSQYINYDIEIPIHDLIKDVAIFKNKETVYYLKLNNKTIARFTYFNNIDTAITQEHEYVKIALGIVCKLMINNMHSIVGVNHSNTFVNCLLEDNV.

This sequence belongs to the orthopoxvirus B17 protein family.

The chain is Protein B17 from Vaccinia virus (strain Western Reserve) (VACV).